Here is a 634-residue protein sequence, read N- to C-terminus: 1-deoxy-D-xylulose-5-phosphate synthase (634 aa).

Thiamine diphosphate contacts are provided by residues His-74 and 115 to 117 (AHS). Asp-146 is a binding site for Mg(2+). Thiamine diphosphate is bound by residues 147 to 148 (GA), Asn-176, Tyr-283, and Glu-365. Asn-176 lines the Mg(2+) pocket.

The protein belongs to the transketolase family. DXPS subfamily. In terms of assembly, homodimer. Requires Mg(2+) as cofactor. Thiamine diphosphate serves as cofactor.

The enzyme catalyses D-glyceraldehyde 3-phosphate + pyruvate + H(+) = 1-deoxy-D-xylulose 5-phosphate + CO2. The protein operates within metabolic intermediate biosynthesis; 1-deoxy-D-xylulose 5-phosphate biosynthesis; 1-deoxy-D-xylulose 5-phosphate from D-glyceraldehyde 3-phosphate and pyruvate: step 1/1. Its function is as follows. Catalyzes the acyloin condensation reaction between C atoms 2 and 3 of pyruvate and glyceraldehyde 3-phosphate to yield 1-deoxy-D-xylulose-5-phosphate (DXP). The polypeptide is 1-deoxy-D-xylulose-5-phosphate synthase (Burkholderia lata (strain ATCC 17760 / DSM 23089 / LMG 22485 / NCIMB 9086 / R18194 / 383)).